A 221-amino-acid polypeptide reads, in one-letter code: MNYLTHQLLNPKEINLLKKNLTLQDISWEDGKKTAGNHAAKVKNNLQLDRSSNISKKCTGLIEKKILSDVLIKSFALPKRIHGTMFTKTLKGMKYGRHIDNAFMSSGRADLSFTIFLNEKDKYSGGELLIEGLNSEDKFKLDSGGIIIYPSTYLHSVLEVFSGERFVVVGWIESYVKSIEEREYLFDLDAGARSLLAKHGRSDELDLIFKSYSNLLRTLGE.

In terms of domain architecture, Fe2OG dioxygenase spans 80-174 (RIHGTMFTKT…RFVVVGWIES (95 aa)). His98, Asp100, and His155 together coordinate Fe cation. Arg165 lines the 2-oxoglutarate pocket.

The cofactor is Fe(2+). Requires L-ascorbate as cofactor.

The chain is PKHD-type hydroxylase P9215_13741 from Prochlorococcus marinus (strain MIT 9215).